Here is a 258-residue protein sequence, read N- to C-terminus: UPF0246 protein HS_0482 (258 aa).

Belongs to the UPF0246 family.

In Histophilus somni (strain 129Pt) (Haemophilus somnus), this protein is UPF0246 protein HS_0482.